A 187-amino-acid polypeptide reads, in one-letter code: DNA-3-methyladenine glycosylase 1 (187 aa).

Positions 4, 17, 175, and 179 each coordinate Zn(2+).

It carries out the reaction Hydrolysis of alkylated DNA, releasing 3-methyladenine.. With respect to regulation, activity is controlled by product inhibition. Hydrolysis of the deoxyribose N-glycosidic bond to excise 3-methyladenine from the damaged DNA polymer formed by alkylation lesions. This Escherichia coli (strain K12) protein is DNA-3-methyladenine glycosylase 1.